An 875-amino-acid chain; its full sequence is Importin subunit beta-1 (875 aa).

Position 1 is an N-acetylmethionine (Met-1). HEAT repeat units follow at residues 2 to 31, 33 to 64, 84 to 122, 128 to 159, and 169 to 201; these read ELIT…AAVE, LPTF…IRLL, ANAR…EIPV, LIPQ…ICQD, and SNEI…LNSL. Ser-12 carries the phosphoserine modification. The region spanning 21-100 is the Importin N-terminal domain; it reads AQKFLERAAV…KNYVLQTLGT (80 aa). The residue at position 210 (Lys-210) is an N6-acetyllysine. HEAT repeat units lie at residues 211-246, 252-301, 313-359, 363-393, 401-437, 448-484, 499-536, 543-591, 599-638, 643-680, 685-723, 731-775, 785-828, and 830-872; these read ESER…IMSL, ETYM…EAAE, YAKG…TCCE, VPHV…GSIL, LKPL…ICEL, LAPL…YEAA, SSSF…EIVK, YPAV…QNVL, ALQI…VEVL, LKYM…CRAL, LPFC…TLAI, LEVV…VQGL, DVML…CTAF, and KDVL…RKLK. Positions 285–461 are essential for high affinity interaction with RPL23A; the sequence is VCDEEMDLAI…LQCLIEGLSA (177 aa). Positions 328-341 are IAB-binding; it reads TLTKQDENDDDDDW. A ran-GTP binding region spans residues 333–418; that stretch reads DENDDDDDWN…MPTLIELMKD (86 aa). N6-acetyllysine is present on residues Lys-834 and Lys-866.

Belongs to the importin beta family. Importin beta-1 subfamily. Forms a complex with an importin alpha subunit. Interacts with XPO1. Forms a heterodimer with IPO7. The KPNB1/IPO7 heterodimer interacts with H1 histone. Interacts with SNUPN. Interacts with H2A, H2B, H3 and H4 histones. Component of an import snRNP complex composed of KPNB1, SNUPN, SMN1 and ZNF259. Component of a nuclear export receptor complex composed of KPNB1, Ran, SNUPN and XPO1. Interacts with SRY. Interacts with PRKCI/atypical protein kinase C iota. Interacts with KPNA2. Interacts with KPNA7. Interacts with SNAI1 (via zinc fingers) and SNAI2 (via zinc fingers). Interacts with SLC35G1 and STIM1. Interacts with DCAF8. Interacts with RAN. Interacts with NUMA1 (via C-terminus); this interaction is inhibited by RanGTP. Interacts with ZBED1/hDREF; required for nuclear import of ZBED1/hDREF. Interacts with SRP19. Interacts with RPL23A (via BIB domain), RPS7 and RPL5. Mono-ADP-ribosylated by PARP16.

It localises to the cytoplasm. Its subcellular location is the nucleus envelope. Its function is as follows. Functions in nuclear protein import, either in association with an adapter protein, like an importin-alpha subunit, which binds to nuclear localization signals (NLS) in cargo substrates, or by acting as autonomous nuclear transport receptor. Acting autonomously, serves itself as NLS receptor. Docking of the importin/substrate complex to the nuclear pore complex (NPC) is mediated by KPNB1 through binding to nucleoporin FxFG repeats and the complex is subsequently translocated through the pore by an energy requiring, Ran-dependent mechanism. At the nucleoplasmic side of the NPC, Ran binds to importin-beta and the three components separate and importin-alpha and -beta are re-exported from the nucleus to the cytoplasm where GTP hydrolysis releases Ran from importin. The directionality of nuclear import is thought to be conferred by an asymmetric distribution of the GTP- and GDP-bound forms of Ran between the cytoplasm and nucleus. Mediates autonomously the nuclear import of ribosomal proteins RPL23A, RPS7 and RPL5. In association with IPO7, mediates the nuclear import of H1 histone. In vitro, mediates nuclear import of H2A, H2B, H3 and H4 histones. Imports MRTFA, SNAI1 and PRKCI into the nucleus. In Rattus norvegicus (Rat), this protein is Importin subunit beta-1 (Kpnb1).